The primary structure comprises 545 residues: CTP synthase (545 aa).

The tract at residues Met-1–Ile-266 is amidoligase domain. A CTP-binding site is contributed by Ser-14. UTP is bound at residue Ser-14. ATP-binding positions include Ser-15–Ile-20 and Asp-72. 2 residues coordinate Mg(2+): Asp-72 and Glu-140. Residues Asp-147–Glu-149, Lys-187–Gln-192, and Lys-223 contribute to the CTP site. UTP is bound by residues Lys-187–Gln-192 and Lys-223. Residue Lys-239–Val-241 participates in ATP binding. A Glutamine amidotransferase type-1 domain is found at Thr-291–Arg-542. Gly-352 lines the L-glutamine pocket. Residue Cys-379 is the Nucleophile; for glutamine hydrolysis of the active site. L-glutamine-binding positions include Leu-380–Gln-383, Glu-403, and Arg-470. Active-site residues include His-515 and Glu-517.

This sequence belongs to the CTP synthase family. As to quaternary structure, homotetramer.

It catalyses the reaction UTP + L-glutamine + ATP + H2O = CTP + L-glutamate + ADP + phosphate + 2 H(+). It carries out the reaction L-glutamine + H2O = L-glutamate + NH4(+). The catalysed reaction is UTP + NH4(+) + ATP = CTP + ADP + phosphate + 2 H(+). It functions in the pathway pyrimidine metabolism; CTP biosynthesis via de novo pathway; CTP from UDP: step 2/2. Its activity is regulated as follows. Allosterically activated by GTP, when glutamine is the substrate; GTP has no effect on the reaction when ammonia is the substrate. The allosteric effector GTP functions by stabilizing the protein conformation that binds the tetrahedral intermediate(s) formed during glutamine hydrolysis. Inhibited by the product CTP, via allosteric rather than competitive inhibition. Catalyzes the ATP-dependent amination of UTP to CTP with either L-glutamine or ammonia as the source of nitrogen. Regulates intracellular CTP levels through interactions with the four ribonucleotide triphosphates. This Shewanella denitrificans (strain OS217 / ATCC BAA-1090 / DSM 15013) protein is CTP synthase.